The sequence spans 274 residues: Putative pyruvate, phosphate dikinase regulatory protein (274 aa).

151 to 158 (GVSRTSKT) provides a ligand contact to ADP.

The protein belongs to the pyruvate, phosphate/water dikinase regulatory protein family. PDRP subfamily.

It carries out the reaction N(tele)-phospho-L-histidyl/L-threonyl-[pyruvate, phosphate dikinase] + ADP = N(tele)-phospho-L-histidyl/O-phospho-L-threonyl-[pyruvate, phosphate dikinase] + AMP + H(+). The enzyme catalyses N(tele)-phospho-L-histidyl/O-phospho-L-threonyl-[pyruvate, phosphate dikinase] + phosphate + H(+) = N(tele)-phospho-L-histidyl/L-threonyl-[pyruvate, phosphate dikinase] + diphosphate. Its function is as follows. Bifunctional serine/threonine kinase and phosphorylase involved in the regulation of the pyruvate, phosphate dikinase (PPDK) by catalyzing its phosphorylation/dephosphorylation. The polypeptide is Putative pyruvate, phosphate dikinase regulatory protein (Pelagibacter ubique (strain HTCC1062)).